Here is a 279-residue protein sequence, read N- to C-terminus: Diaminopimelate epimerase (279 aa).

Residues N11 and N64 each contribute to the substrate site. C73 functions as the Proton donor in the catalytic mechanism. Substrate contacts are provided by residues 74-75, N170, and 187-188; these read GN and ER. The active-site Proton acceptor is C196. Substrate is bound at residue 197–198; sequence GS. The segment at 255 to 279 is disordered; sequence NTDHQRRRHSLSRSPSGRPRLQECR.

This sequence belongs to the diaminopimelate epimerase family. Homodimer.

It is found in the cytoplasm. The catalysed reaction is (2S,6S)-2,6-diaminopimelate = meso-2,6-diaminopimelate. It participates in amino-acid biosynthesis; L-lysine biosynthesis via DAP pathway; DL-2,6-diaminopimelate from LL-2,6-diaminopimelate: step 1/1. Its function is as follows. Catalyzes the stereoinversion of LL-2,6-diaminopimelate (L,L-DAP) to meso-diaminopimelate (meso-DAP), a precursor of L-lysine. The chain is Diaminopimelate epimerase from Methanopyrus kandleri (strain AV19 / DSM 6324 / JCM 9639 / NBRC 100938).